Here is a 571-residue protein sequence, read N- to C-terminus: Proline--tRNA ligase (571 aa).

Belongs to the class-II aminoacyl-tRNA synthetase family. ProS type 1 subfamily. In terms of assembly, homodimer.

It is found in the cytoplasm. The catalysed reaction is tRNA(Pro) + L-proline + ATP = L-prolyl-tRNA(Pro) + AMP + diphosphate. In terms of biological role, catalyzes the attachment of proline to tRNA(Pro) in a two-step reaction: proline is first activated by ATP to form Pro-AMP and then transferred to the acceptor end of tRNA(Pro). As ProRS can inadvertently accommodate and process non-cognate amino acids such as alanine and cysteine, to avoid such errors it has two additional distinct editing activities against alanine. One activity is designated as 'pretransfer' editing and involves the tRNA(Pro)-independent hydrolysis of activated Ala-AMP. The other activity is designated 'posttransfer' editing and involves deacylation of mischarged Ala-tRNA(Pro). The misacylated Cys-tRNA(Pro) is not edited by ProRS. The chain is Proline--tRNA ligase from Pseudoalteromonas atlantica (strain T6c / ATCC BAA-1087).